Consider the following 253-residue polypeptide: Isopentenyl-diphosphate delta-isomerase IDI1 (253 aa).

Residue K61 participates in substrate binding. Residues H65 and H76 each contribute to the Mg(2+) site. One can recognise a Nudix hydrolase domain in the interval 74–224 (LLHRAFSVFL…SLVFTPWFKL (151 aa)). Residues Q94 and K99 each contribute to the substrate site. The active site involves C111. Position 112 (S112) interacts with substrate. The short motif at 112 to 145 (SHPLHIPTETGSTLEDSIAGVKRAAQRKLEHELG) is the Nudix box element. Positions 174 and 176 each coordinate Mg(2+). Residue E176 is part of the active site.

It belongs to the IPP isomerase type 1 family. The cofactor is Mg(2+).

The catalysed reaction is isopentenyl diphosphate = dimethylallyl diphosphate. Its pathway is isoprenoid biosynthesis; dimethylallyl diphosphate biosynthesis; dimethylallyl diphosphate from isopentenyl diphosphate: step 1/1. Isopentenyl-diphosphate delta-isomerase; part of the second module of ergosterol biosynthesis pathway that includes the middle steps of the pathway. IDI1 catalyzes the 1,3-allylic rearrangement of isopentenyl (IPP) to its highly electrophilic allylic isomer, dimethylallyl diphosphate (DMAPP). The second module is carried out in the vacuole and involves the formation of farnesyl diphosphate, which is also an important intermediate in the biosynthesis of ubiquinone, dolichol, heme and prenylated proteins. Activity by the mevalonate kinase ERG12 (FG05912) first converts mevalonate into 5-phosphomevalonate. 5-phosphomevalonate is then further converted to 5-diphosphomevalonate by the phosphomevalonate kinase ERG8 (FG09764). The diphosphomevalonate decarboxylase ERG19 (FG10424) then produces isopentenyl diphosphate. The isopentenyl-diphosphate delta-isomerase IDI1 (FG09722) then catalyzes the 1,3-allylic rearrangement of the homoallylic substrate isopentenyl (IPP) to its highly electrophilic allylic isomer, dimethylallyl diphosphate (DMAPP). Finally the farnesyl diphosphate synthase ERG20 (FG06784) catalyzes the sequential condensation of isopentenyl pyrophosphate with dimethylallyl pyrophosphate, and then with the resultant geranylpyrophosphate to the ultimate product farnesyl pyrophosphate. This is Isopentenyl-diphosphate delta-isomerase IDI1 from Gibberella zeae (strain ATCC MYA-4620 / CBS 123657 / FGSC 9075 / NRRL 31084 / PH-1) (Wheat head blight fungus).